The sequence spans 282 residues: tRNA uridine(34) hydroxylase (282 aa).

One can recognise a Rhodanese domain in the interval 128-222 (EGRPVVMLDT…YFEEVGGDHY (95 aa)). The Cysteine persulfide intermediate role is filled by Cys182.

Belongs to the TrhO family.

It catalyses the reaction uridine(34) in tRNA + AH2 + O2 = 5-hydroxyuridine(34) in tRNA + A + H2O. Its function is as follows. Catalyzes oxygen-dependent 5-hydroxyuridine (ho5U) modification at position 34 in tRNAs. The polypeptide is tRNA uridine(34) hydroxylase (Cupriavidus pinatubonensis (strain JMP 134 / LMG 1197) (Cupriavidus necator (strain JMP 134))).